Consider the following 833-residue polypeptide: Urease (833 aa).

The 439-residue stretch at 395–833 (GALDVHVHYI…LPLTRRYFVY (439 aa)) folds into the Urease domain. Ni(2+) is bound by residues H400 and H402. Urea-binding residues include H402 and A433. K483 is a binding site for Ni(2+). K483 carries the post-translational modification N6-carboxylysine. Urea is bound by residues H485 and H512. Residues H512 and H538 each coordinate Ni(2+). The active-site Proton donor is H586. D626 lines the Ni(2+) pocket. Position 629 (A629) interacts with urea.

In the C-terminal section; belongs to the metallo-dependent hydrolases superfamily. Urease alpha subunit family. In terms of assembly, homohexamer. It depends on Ni(2+) as a cofactor. In terms of processing, carboxylation allows a single lysine to coordinate two nickel ions.

The enzyme catalyses urea + 2 H2O + H(+) = hydrogencarbonate + 2 NH4(+). The protein operates within nitrogen metabolism; urea degradation; CO(2) and NH(3) from urea (urease route): step 1/1. The urease accessory proteins URE4, URE6 and URE7 are required for urease activity, URE7 supplying nickel for the functional urease. Functionally, plays a nutritional role via nitrogen acquisition in the environment. Contributes to the central nervous system invasion by enhancing yeast sequestration within microcapillary beds (such as within the brain) during hematogenous spread, thereby facilitating blood-to-brain invasion by C.neoformans. Affects fitness within the mammalian phagosome, promoting non-lytic exocytosis while delaying intracellular replication and thus reducing phagolysosomal membrane damage, events that could facilitate cryptococcal dissemination when transported inside macrophages. Urease activity is also associated with the regulation of key intracellular metabolic pathways, including melanin biosynthesis, polyamine biosynthesis, as well as intracellular levels of proline and reactive oxygen species. The polypeptide is Urease (Cryptococcus neoformans var. grubii serotype A (strain H99 / ATCC 208821 / CBS 10515 / FGSC 9487) (Filobasidiella neoformans var. grubii)).